A 92-amino-acid chain; its full sequence is Large ribosomal subunit protein bL27 (92 aa).

The disordered stretch occupies residues 1–21; it reads MSKKKGVGSSRNGRDSESKRL. The span at 12 to 21 shows a compositional bias: basic and acidic residues; the sequence is NGRDSESKRL.

This sequence belongs to the bacterial ribosomal protein bL27 family.

This chain is Large ribosomal subunit protein bL27, found in Halothermothrix orenii (strain H 168 / OCM 544 / DSM 9562).